Here is a 138-residue protein sequence, read N- to C-terminus: Endoribonuclease YbeY (138 aa).

3 residues coordinate Zn(2+): H106, H110, and D116.

The protein belongs to the endoribonuclease YbeY family. Zn(2+) is required as a cofactor.

The protein localises to the cytoplasm. Functionally, single strand-specific metallo-endoribonuclease involved in late-stage 70S ribosome quality control and in maturation of the 3' terminus of the 16S rRNA. In Phocaeicola vulgatus (strain ATCC 8482 / DSM 1447 / JCM 5826 / CCUG 4940 / NBRC 14291 / NCTC 11154) (Bacteroides vulgatus), this protein is Endoribonuclease YbeY.